The sequence spans 219 residues: N-(5'-phosphoribosyl)anthranilate isomerase (219 aa).

The protein belongs to the TrpF family.

The enzyme catalyses N-(5-phospho-beta-D-ribosyl)anthranilate = 1-(2-carboxyphenylamino)-1-deoxy-D-ribulose 5-phosphate. It functions in the pathway amino-acid biosynthesis; L-tryptophan biosynthesis; L-tryptophan from chorismate: step 3/5. This chain is N-(5'-phosphoribosyl)anthranilate isomerase, found in Chloroherpeton thalassium (strain ATCC 35110 / GB-78).